We begin with the raw amino-acid sequence, 952 residues long: Leucine--tRNA ligase (952 aa).

The 'HIGH' region motif lies at 66–77 (PYPSGAGLHVGH). The 'KMSKS' region motif lies at 722-726 (KMGKS). Residue Lys-725 participates in ATP binding.

This sequence belongs to the class-I aminoacyl-tRNA synthetase family.

It localises to the cytoplasm. It catalyses the reaction tRNA(Leu) + L-leucine + ATP = L-leucyl-tRNA(Leu) + AMP + diphosphate. This is Leucine--tRNA ligase from Corynebacterium glutamicum (strain R).